The chain runs to 239 residues: Ion-translocating oxidoreductase complex subunit E (239 aa).

5 helical membrane-spanning segments follow: residues 41-61 (LGLGLATLLVLVCSNAAVSLV), 71-91 (LPAFVMIIAALTTCIELLMQA), 95-115 (ELYQILGIFIPLITTNCVILG), 130-150 (SFDGLLTGLGFALVLLVLGGL), and 184-204 (GFLLAILPPGAFIMLGLLIAL).

The protein belongs to the NqrDE/RnfAE family. In terms of assembly, the complex is composed of six subunits: RnfA, RnfB, RnfC, RnfD, RnfE and RnfG.

The protein resides in the cell inner membrane. In terms of biological role, part of a membrane-bound complex that couples electron transfer with translocation of ions across the membrane. This Pseudomonas paraeruginosa (strain DSM 24068 / PA7) (Pseudomonas aeruginosa (strain PA7)) protein is Ion-translocating oxidoreductase complex subunit E.